Consider the following 70-residue polypeptide: Sec-independent protein translocase protein TatA (70 aa).

A helical membrane pass occupies residues M1–G21. Residues K45–G70 form a disordered region.

The protein belongs to the TatA/E family. The Tat system comprises two distinct complexes: a TatABC complex, containing multiple copies of TatA, TatB and TatC subunits, and a separate TatA complex, containing only TatA subunits. Substrates initially bind to the TatABC complex, which probably triggers association of the separate TatA complex to form the active translocon.

It localises to the cell inner membrane. In terms of biological role, part of the twin-arginine translocation (Tat) system that transports large folded proteins containing a characteristic twin-arginine motif in their signal peptide across membranes. TatA could form the protein-conducting channel of the Tat system. In Phenylobacterium zucineum (strain HLK1), this protein is Sec-independent protein translocase protein TatA.